We begin with the raw amino-acid sequence, 762 residues long: uncharacterized protein (762 aa).

Positions Q734–T762 are disordered. Pro residues predominate over residues A743–A753.

This is an uncharacterized protein from Ostreid herpesvirus 1 (isolate France) (OsHV-1).